The primary structure comprises 306 residues: Recombination-associated protein RdgC (306 aa).

This sequence belongs to the RdgC family.

The protein localises to the cytoplasm. It localises to the nucleoid. Its function is as follows. May be involved in recombination. This is Recombination-associated protein RdgC from Pseudomonas syringae pv. syringae (strain B728a).